Reading from the N-terminus, the 488-residue chain is Fumarate hydratase, mitochondrial (488 aa).

The N-terminal 24 residues, 1-24 (MLRFTNCSCKTFVKSSYKLNIRRM), are a transit peptide targeting the mitochondrion. Residues 124–126 (SGT), 154–157 (HPNN), 164–166 (SSN), and Thr212 contribute to the substrate site. The Proton donor/acceptor role is filled by His213. Residue Ser343 is part of the active site. Substrate is bound by residues Ser344 and 349 to 351 (KVN). At Thr428 the chain carries Phosphothreonine.

It belongs to the class-II fumarase/aspartase family. Fumarase subfamily. Homotetramer.

The protein resides in the mitochondrion matrix. Its subcellular location is the cytoplasm. It localises to the nucleus. The catalysed reaction is (S)-malate = fumarate + H2O. The protein operates within carbohydrate metabolism; tricarboxylic acid cycle; (S)-malate from fumarate: step 1/1. Functionally, catalyzes the reversible stereospecific interconversion of fumarate to L-malate. In mitochondrion, catalyzes the hydration of fumarate to L-malate in the tricarboxylic acid (TCA) cycle to facilitate a transition step in the production of energy in the form of NADH. In cytoplasm and nucleus, involved in DNA repair in response to DNA damage: following DNA double-strand breaks (DSBs), translocates from the cytosol to the nucleus and promotes DNA repair by catalyzing the dehydration of L-malate to fumarate. This is Fumarate hydratase, mitochondrial from Saccharomyces cerevisiae (strain ATCC 204508 / S288c) (Baker's yeast).